The chain runs to 254 residues: Protein Thf1 (254 aa).

Residues 182–241 (EEKMKKDLDLYRSNLEKMNQVLEVLEDALAVERQRREKAEAEAKAKTAEATVATETNDEQ) adopt a coiled-coil conformation. The segment covering 215-228 (QRREKAEAEAKAKT) has biased composition (basic and acidic residues). Residues 215 to 254 (QRREKAEAEAKAKTAEATVATETNDEQDEQKETSESGSDA) form a disordered region.

Belongs to the THF1 family.

Functionally, may be involved in photosynthetic membrane biogenesis. In Picosynechococcus sp. (strain ATCC 27264 / PCC 7002 / PR-6) (Agmenellum quadruplicatum), this protein is Protein Thf1.